The following is a 100-amino-acid chain: Urease subunit gamma (100 aa).

The protein belongs to the urease gamma subunit family. In terms of assembly, heterotrimer of UreA (gamma), UreB (beta) and UreC (alpha) subunits. Three heterotrimers associate to form the active enzyme.

It is found in the cytoplasm. It catalyses the reaction urea + 2 H2O + H(+) = hydrogencarbonate + 2 NH4(+). It functions in the pathway nitrogen metabolism; urea degradation; CO(2) and NH(3) from urea (urease route): step 1/1. The protein is Urease subunit gamma of Synechocystis sp. (strain ATCC 27184 / PCC 6803 / Kazusa).